Reading from the N-terminus, the 967-residue chain is Sarcosine oxidase subunit alpha (967 aa).

Alanine 141, aspartate 160, glutamate 161, arginine 162, serine 168, valine 207, alanine 420, and threonine 427 together coordinate NAD(+). (6R)-5,10-methylene-5,6,7,8-tetrahydrofolate-binding residues include threonine 694 and glutamate 786.

Belongs to the GcvT family. As to quaternary structure, heterotetramer composed of subunits alpha (SoxA), beta (SoxB), gamma (SoxG) and delta (SoxD). Requires NAD(+) as cofactor.

The protein localises to the cytoplasm. The catalysed reaction is sarcosine + (6S)-5,6,7,8-tetrahydrofolate + O2 = (6R)-5,10-methylene-5,6,7,8-tetrahydrofolate + glycine + H2O2. It carries out the reaction sarcosine + O2 + H2O = formaldehyde + glycine + H2O2. Functionally, in the presence of tetrahydrofolate, catalyzes the oxidative demethylation of sarcosine to yield glycine, 5,10-methylenetetrahydrofolate and hydrogen peroxide. In the absence of tetrahydrofolate, catalyzes the oxidative demethylation of sarcosine to yield glycine, formaldehyde and hydrogen peroxide. In Corynebacterium sp. (strain P-1), this protein is Sarcosine oxidase subunit alpha.